The chain runs to 164 residues: Cell division protein SepF (164 aa).

Residues 21–71 (YQQGQQPAQQQQSPVQAVPTPAPAPQQQAKRAPVTPLHKPSTTTRNAAPAE) form a disordered region. The span at 22 to 54 (QQGQQPAQQQQSPVQAVPTPAPAPQQQAKRAPV) shows a compositional bias: low complexity.

Belongs to the SepF family. In terms of assembly, homodimer. Interacts with FtsZ.

It localises to the cytoplasm. In terms of biological role, cell division protein that is part of the divisome complex and is recruited early to the Z-ring. Probably stimulates Z-ring formation, perhaps through the cross-linking of FtsZ protofilaments. Its function overlaps with FtsA. In Clavibacter michiganensis subsp. michiganensis (strain NCPPB 382), this protein is Cell division protein SepF.